The following is a 208-amino-acid chain: Large ribosomal subunit protein uL3 (208 aa).

Q149 is subject to N5-methylglutamine.

This sequence belongs to the universal ribosomal protein uL3 family. In terms of assembly, part of the 50S ribosomal subunit. Forms a cluster with proteins L14 and L19. In terms of processing, methylated by PrmB.

In terms of biological role, one of the primary rRNA binding proteins, it binds directly near the 3'-end of the 23S rRNA, where it nucleates assembly of the 50S subunit. The sequence is that of Large ribosomal subunit protein uL3 from Glaesserella parasuis serovar 5 (strain SH0165) (Haemophilus parasuis).